A 182-amino-acid chain; its full sequence is Large ribosomal subunit protein uL6 (182 aa).

The protein belongs to the universal ribosomal protein uL6 family. As to quaternary structure, part of the 50S ribosomal subunit.

In terms of biological role, this protein binds to the 23S rRNA, and is important in its secondary structure. It is located near the subunit interface in the base of the L7/L12 stalk, and near the tRNA binding site of the peptidyltransferase center. This is Large ribosomal subunit protein uL6 from Carboxydothermus hydrogenoformans (strain ATCC BAA-161 / DSM 6008 / Z-2901).